Reading from the N-terminus, the 313-residue chain is Porphobilinogen deaminase (313 aa).

S-(dipyrrolylmethanemethyl)cysteine is present on Cys-242.

Belongs to the HMBS family. As to quaternary structure, monomer. It depends on dipyrromethane as a cofactor.

It carries out the reaction 4 porphobilinogen + H2O = hydroxymethylbilane + 4 NH4(+). Its pathway is porphyrin-containing compound metabolism; protoporphyrin-IX biosynthesis; coproporphyrinogen-III from 5-aminolevulinate: step 2/4. Functionally, tetrapolymerization of the monopyrrole PBG into the hydroxymethylbilane pre-uroporphyrinogen in several discrete steps. The sequence is that of Porphobilinogen deaminase from Yersinia pseudotuberculosis serotype IB (strain PB1/+).